The chain runs to 1088 residues: RNA-directed RNA polymerase (1088 aa).

The region spanning 501-687 (LSYGDVTRFL…AKRYIAGGKI (187 aa)) is the RdRp catalytic domain.

The protein belongs to the reoviridae RNA-directed RNA polymerase family. As to quaternary structure, interacts with VP3 (Potential). Interacts with VP2; this interaction activates VP1. Interacts with NSP5; this interaction is probably necessary for the formation of functional virus factories. Interacts with NSP2; this interaction is weak. The cofactor is Mg(2+).

The protein localises to the virion. The enzyme catalyses RNA(n) + a ribonucleoside 5'-triphosphate = RNA(n+1) + diphosphate. Functionally, RNA-directed RNA polymerase that is involved in both transcription and genome replication. Together with VP3 capping enzyme, forms an enzyme complex positioned near the channels situated at each of the five-fold vertices of the core. Following infection, the outermost layer of the virus is lost, leaving a double-layered particle (DLP) made up of the core and VP6 shell. VP1 then catalyzes the transcription of fully conservative plus-strand genomic RNAs that are extruded through the DLP's channels into the cytoplasm where they function as mRNAs for translation of viral proteins. One copy of each of the viral (+)RNAs is also recruited during core assembly, together with newly synthesized polymerase complexes and VP2. The polymerase of these novo-formed particles catalyzes the synthesis of complementary minus-strands leading to dsRNA formation. To do so, the polymerase specifically recognizes and binds 4 bases 5'-UGUG-3' in the conserved 3'-sequence of plus-strand RNA templates. VP2 presumably activates the autoinhibited VP1-RNA complex to coordinate packaging and genome replication. Once dsRNA synthesis is complete, the polymerase switches to the transcriptional mode, thus providing secondary transcription. This Rotavirus A (strain RVA/Pig/United States/Gottfried/1983/G4P2B[6]) (RV-A) protein is RNA-directed RNA polymerase.